Here is a 238-residue protein sequence, read N- to C-terminus: Ribonuclease PH (238 aa).

Residues Arg86 and 124 to 126 (GTR) contribute to the phosphate site.

This sequence belongs to the RNase PH family. As to quaternary structure, homohexameric ring arranged as a trimer of dimers.

It carries out the reaction tRNA(n+1) + phosphate = tRNA(n) + a ribonucleoside 5'-diphosphate. Its function is as follows. Phosphorolytic 3'-5' exoribonuclease that plays an important role in tRNA 3'-end maturation. Removes nucleotide residues following the 3'-CCA terminus of tRNAs; can also add nucleotides to the ends of RNA molecules by using nucleoside diphosphates as substrates, but this may not be physiologically important. Probably plays a role in initiation of 16S rRNA degradation (leading to ribosome degradation) during starvation. The polypeptide is Ribonuclease PH (Psychrobacter arcticus (strain DSM 17307 / VKM B-2377 / 273-4)).